A 710-amino-acid chain; its full sequence is Early transcription factor 82 kDa subunit (710 aa).

Belongs to the poxviridae VETF large subunit family. Heterodimer of a 70 kDa and a 82 kDa subunit. Part of the early transcription complex composed of ETF, RAP94/OPG109, and the DNA-directed RNA polymerase.

The protein resides in the virion. Its function is as follows. Acts with RNA polymerase to initiate transcription from early gene promoters. Is recruited by the RPO-associated protein of 94 kDa RAP94/OPG109 to form the early transcription complex, which also contains the core RNA polymerase. ETF heterodimer binds to early gene promoters. The polypeptide is Early transcription factor 82 kDa subunit (OPG133) (Vaccinia virus (strain Ankara) (VACV)).